Here is a 944-residue protein sequence, read N- to C-terminus: MESLQGKESNGAVPVCNGGGGAAAPPAKQQLPEGTDALRYANILRSRNKFADALQLYTTVLDKDGANVEALIGKGICLQAQSLPRQALDCFTEAVKVDPKNACALTHCGMIYKDEGHLVEAAEAYQKARSADPSYKAASEFLAIVLTDLGTSLKLAGNTEDGIQKYCEALEVDSHYAPAYYNLGVVYSEMMQFDVALTCYEKAALERPLYAEAYCNMGVIYKNRGELDAAIACYDRCLTISPNFEIAKNNMAIALTDLGTKVKIEGDINQGVAYYKKALFYNWHYADAMYNLGVAYGEMLNFEMAIVFYELALHFNPRCAEACNNLGVIYKDRDNLDKAVECYQMALSIKPNFSQSLNNLGVVYTVQGKMDAAASMIEKAILANPTYAEAYNNLGVLYRDAGSITLSVQAYERCLQIDPDSRNAGQNRLLAMNYIDEGSDDKLYDAHREWGKRFMKLYAQYTSWDNPKVADRPLVIGYVSPDFFTHSVSYFVEAPLTHHDYTKCKVVVYSGVVKADAKTLRFKDKVLKKGGVWRDIYGIDEKKVATLVREDKVDILVELTGHTANNKLGTMACRPAPIQVTWIGYPNTTGLPAIDYRITDSLADSPNTNQKHVEELVRLPESFLCYTPSPEAGPVCPTPAISNGFITFGSFNNLAKITPKVMQVWARILCAVPNSRLVVKCKPFCCDSIRQKFLSTLEELGLESLRVDLLPLIHLNHDHMQAYSLMDISLDTFPYAGTTTTCESLYMGVPCVTMAGSVHAHNVGVSLLTKVGLGRLVAKTEDEYVSLALDLASDVSALEELRKSLRELMIKSPVCDGESFTRGLESAYRSMWHRYCDGDSPALRRLEVLADQTGEDLNKTAVKLADLKAQRVNATAEEDNQSPVTKFDATSKGGEQPQPQIMVNGVTSPEGNQAVKAQPQIMVNGVSSPHSPSGRCEANGHSSR.

TPR repeat units follow at residues 34–67 (GTDA…DGAN), 68–101 (VEAL…DPKN), 102–135 (ACAL…DPSY), 143–176 (AIVL…DSHY), 177–210 (APAY…RPLY), 211–244 (AEAY…SPNF), 252–285 (AIAL…NWHY), 286–319 (ADAM…NPRC), 320–353 (AEAC…KPNF), 355–387 (QSLN…NPTY), and 388–421 (AEAY…DPDS). Residues 422 to 944 (RNAGQNRLLA…RCEANGHSSR (523 aa)) form a catalytic region region. Residues 873 to 944 (NATAEEDNQS…RCEANGHSSR (72 aa)) form a disordered region. Positions 897 to 911 (PQPQIMVNGVTSPEG) are enriched in polar residues.

It belongs to the glycosyltransferase 41 family. O-GlcNAc transferase subfamily. As to expression, expressed in all parts of plants, including immature leaf blade, leaf sheath, mature leaf blade, roots, germinating embryos and aleurone layers.

The protein localises to the nucleus. It carries out the reaction L-seryl-[protein] + UDP-N-acetyl-alpha-D-glucosamine = 3-O-(N-acetyl-beta-D-glucosaminyl)-L-seryl-[protein] + UDP + H(+). The enzyme catalyses L-threonyl-[protein] + UDP-N-acetyl-alpha-D-glucosamine = 3-O-(N-acetyl-beta-D-glucosaminyl)-L-threonyl-[protein] + UDP + H(+). It functions in the pathway protein modification; protein glycosylation. Its function is as follows. Probable O-linked N-acetylglucosamine transferase (OGT) involved in various processes such as gibberellin (GA) signaling pathway. OGTs catalyze the addition of nucleotide-activated sugars directly onto the polypeptide through O-glycosidic linkage with the hydroxyl of serine or threonine. Probably acts by adding O-linked sugars to yet unknown proteins. The protein is Probable UDP-N-acetylglucosamine--peptide N-acetylglucosaminyltransferase SPINDLY (SPY) of Hordeum vulgare (Barley).